We begin with the raw amino-acid sequence, 268 residues long: Ubiquinone biosynthesis protein COQ4 homolog, mitochondrial (268 aa).

Zn(2+) is bound by residues His-171, Asp-172, His-175, and Glu-187.

The protein belongs to the COQ4 family. Component of a multi-subunit COQ enzyme complex. It depends on Zn(2+) as a cofactor.

It is found in the mitochondrion inner membrane. The enzyme catalyses a 4-hydroxy-3-methoxy-5-(all-trans-polyprenyl)benzoate + H(+) = a 2-methoxy-6-(all-trans-polyprenyl)phenol + CO2. The protein operates within cofactor biosynthesis; ubiquinone biosynthesis. Its function is as follows. Lyase that catalyzes the C1-decarboxylation of 4-hydroxy-3-methoxy-5-(all-trans-polyprenyl)benzoic acid into 2-methoxy-6-(all-trans-polyprenyl)phenol during ubiquinone biosynthesis. This Drosophila sechellia (Fruit fly) protein is Ubiquinone biosynthesis protein COQ4 homolog, mitochondrial.